A 98-amino-acid polypeptide reads, in one-letter code: MTIDAKHYDVIVAPVITEKATMASEYNKVVFKVTRKATKPQIKEAVEKLFDVKVKSVNTLVRKGKAKVFRGSFGSQSDSKRAVVTLEEGHRIDVTTGL.

It belongs to the universal ribosomal protein uL23 family. Part of the 50S ribosomal subunit. Contacts protein L29, and trigger factor when it is bound to the ribosome.

One of the early assembly proteins it binds 23S rRNA. One of the proteins that surrounds the polypeptide exit tunnel on the outside of the ribosome. Forms the main docking site for trigger factor binding to the ribosome. The protein is Large ribosomal subunit protein uL23 of Nitrobacter hamburgensis (strain DSM 10229 / NCIMB 13809 / X14).